Reading from the N-terminus, the 649-residue chain is Probable ADP-ribosylation factor GTPase-activating protein AGD14 (649 aa).

The 119-residue stretch at 12 to 130 (EKIIRGLMKL…KYAGANDADK (119 aa)) folds into the Arf-GAP domain. A C4-type zinc finger spans residues 27–50 (CINCNSLGPQYVCTTFWTFVCMAC). 4 disordered regions span residues 124–159 (GAND…QSPP), 209–279 (FSNE…VRSV), 294–316 (LGEA…SNHV), and 366–391 (FTPA…SAPK). Residues 127 to 146 (DADKPSKDSQDHVSSEDMTR) show a composition bias toward basic and acidic residues. Residues 150–159 (SYHSYSQSPP) show a composition bias toward low complexity. Polar residues-rich tracts occupy residues 248–257 (PQFQHSNAPP), 269–279 (RTTSSGSVRSV), 300–315 (ESRQ…TSNH), and 366–385 (FTPA…SRPS).

In terms of biological role, GTPase-activating protein (GAP) for ADP ribosylation factor (ARF). In Arabidopsis thaliana (Mouse-ear cress), this protein is Probable ADP-ribosylation factor GTPase-activating protein AGD14 (AGD14).